A 260-amino-acid chain; its full sequence is Hydroxypyruvate/pyruvate aldolase Bphyt_0320 (260 aa).

The active-site Proton acceptor is the His-48. 2 residues coordinate a divalent metal cation: Glu-157 and Asp-183.

This sequence belongs to the HpcH/HpaI aldolase family. Mn(2+) serves as cofactor. The cofactor is Mg(2+). Co(2+) is required as a cofactor.

It catalyses the reaction D-glyceraldehyde + 3-hydroxypyruvate = 2-dehydro-D-gluconate. The enzyme catalyses D-glyceraldehyde + pyruvate = 2-dehydro-3-deoxy-L-galactonate. The catalysed reaction is 2-dehydro-3-deoxy-D-gluconate = D-glyceraldehyde + pyruvate. Its function is as follows. Aldolase which can catalyze in vitro the aldolisation reaction between hydroxypyruvate (HPA) or pyruvate (PA) and D-glyceraldehyde (D-GA). The condensation of hydroxypyruvate and D-glyceraldehyde produces 2-dehydro-D-gluconate. The condensation of pyruvate and D-glyceraldehyde produces 2-dehydro-3-deoxy-L-galactonate as the major product and 2-dehydro-3-deoxy-D-gluconate. Also catalyzes the retro-aldol type decarboxylation of oxaloacetate, a general property of known pyruvate aldolases. The chain is Hydroxypyruvate/pyruvate aldolase Bphyt_0320 from Paraburkholderia phytofirmans (strain DSM 17436 / LMG 22146 / PsJN) (Burkholderia phytofirmans).